A 564-amino-acid polypeptide reads, in one-letter code: Potassium-transporting ATPase potassium-binding subunit (564 aa).

10 helical membrane-spanning segments follow: residues 4 to 24 (YDYW…PFLG), 67 to 87 (MLAL…ILLF), 135 to 155 (AGLT…LVAL), 179 to 199 (LYGL…QGVP), 254 to 274 (WANL…VFTF), 286 to 306 (AILG…LWAE), 382 to 402 (AGMY…GLMI), 420 to 440 (LLVV…AIAA), 487 to 507 (LMLG…VLAL), and 528 to 548 (GPLF…LTFL).

The protein belongs to the KdpA family. In terms of assembly, the system is composed of three essential subunits: KdpA, KdpB and KdpC.

The protein resides in the cell inner membrane. Part of the high-affinity ATP-driven potassium transport (or Kdp) system, which catalyzes the hydrolysis of ATP coupled with the electrogenic transport of potassium into the cytoplasm. This subunit binds the periplasmic potassium ions and delivers the ions to the membrane domain of KdpB through an intramembrane tunnel. This is Potassium-transporting ATPase potassium-binding subunit from Pseudomonas fluorescens (strain SBW25).